The primary structure comprises 160 residues: Endoplasmic reticulum transmembrane protein 2 (160 aa).

The Lumenal segment spans residues 1-2 (MG). The helical transmembrane segment at 3–23 (VYLAVLFSLLVIEMAILFILV) threads the bilayer. The Cytoplasmic segment spans residues 24–45 (LPLPQRMRRWLYIRYSIISTNK). Residues 46–66 (KFRTYMVGIMIFVGLLFIDSW) traverse the membrane as a helical segment. Topologically, residues 67-103 (KRSQIRVSTYRNQKNPYIINSVTPVDALASRAYNQRN) are lumenal. Residues 104-124 (VYISGFIIYFYICILTVMSIL) form a helical membrane-spanning segment. Residues 125–160 (RRIVEWNDKMKAGDDILKEKLRRKQKYLEELQKKKF) lie on the Cytoplasmic side of the membrane. The Di-lysine motif motif lies at 157-160 (KKKF).

It belongs to the BCAP29/BCAP31 family.

The protein resides in the endoplasmic reticulum membrane. Functionally, may play a role in anterograde transport of membrane proteins from the endoplasmic reticulum to the Golgi. This Saccharomyces cerevisiae (strain ATCC 204508 / S288c) (Baker's yeast) protein is Endoplasmic reticulum transmembrane protein 2 (YET2).